The following is a 400-amino-acid chain: 1-deoxy-D-xylulose 5-phosphate reductoisomerase (400 aa).

NADPH is bound by residues Thr-10, Gly-11, Ser-12, Ile-13, Gly-36, Asn-38, and Asn-124. Residue Lys-125 participates in 1-deoxy-D-xylulose 5-phosphate binding. Residue Glu-126 participates in NADPH binding. Asp-150 contributes to the Mn(2+) binding site. 1-deoxy-D-xylulose 5-phosphate-binding residues include Ser-151, Glu-152, Ser-186, and His-209. Glu-152 is a Mn(2+) binding site. NADPH is bound at residue Gly-215. The 1-deoxy-D-xylulose 5-phosphate site is built by Ser-222, Asn-227, Lys-228, and Glu-231. Glu-231 provides a ligand contact to Mn(2+).

This sequence belongs to the DXR family. Mg(2+) is required as a cofactor. Mn(2+) serves as cofactor.

The catalysed reaction is 2-C-methyl-D-erythritol 4-phosphate + NADP(+) = 1-deoxy-D-xylulose 5-phosphate + NADPH + H(+). It functions in the pathway isoprenoid biosynthesis; isopentenyl diphosphate biosynthesis via DXP pathway; isopentenyl diphosphate from 1-deoxy-D-xylulose 5-phosphate: step 1/6. Functionally, catalyzes the NADPH-dependent rearrangement and reduction of 1-deoxy-D-xylulose-5-phosphate (DXP) to 2-C-methyl-D-erythritol 4-phosphate (MEP). This is 1-deoxy-D-xylulose 5-phosphate reductoisomerase from Aliivibrio fischeri (strain ATCC 700601 / ES114) (Vibrio fischeri).